The sequence spans 184 residues: Large ribosomal subunit protein uL6 (184 aa).

The protein belongs to the universal ribosomal protein uL6 family. Part of the 50S ribosomal subunit.

This protein binds to the 23S rRNA, and is important in its secondary structure. It is located near the subunit interface in the base of the L7/L12 stalk, and near the tRNA binding site of the peptidyltransferase center. The protein is Large ribosomal subunit protein uL6 of Thermococcus gammatolerans (strain DSM 15229 / JCM 11827 / EJ3).